Reading from the N-terminus, the 290-residue chain is Arylamine N-acetyltransferase, pineal gland isozyme NAT-3 (290 aa).

The active-site Acyl-thioester intermediate is the Cys68. Residues His107 and Asp122 contribute to the active site.

This sequence belongs to the arylamine N-acetyltransferase family.

The catalysed reaction is an arylamine + acetyl-CoA = an N-acetylarylamine + CoA. It catalyses the reaction an N-hydroxyarylamine + acetyl-CoA = an N-acetoxyarylamine + CoA. In terms of biological role, catalyzes the N- or O-acetylation of various arylamine and heterocyclic amine substrates, and participates in the detoxification of a plethora of hydrazine and arylamine drugs. The sequence is that of Arylamine N-acetyltransferase, pineal gland isozyme NAT-3 from Gallus gallus (Chicken).